The chain runs to 142 residues: Putative pre-16S rRNA nuclease (142 aa).

It belongs to the YqgF nuclease family.

The protein resides in the cytoplasm. In terms of biological role, could be a nuclease involved in processing of the 5'-end of pre-16S rRNA. In Staphylococcus epidermidis (strain ATCC 35984 / DSM 28319 / BCRC 17069 / CCUG 31568 / BM 3577 / RP62A), this protein is Putative pre-16S rRNA nuclease.